The following is a 1133-amino-acid chain: Protein TOPLESS-RELATED PROTEIN 2 (1133 aa).

The LisH domain occupies 4–36; that stretch reads LSRELVFLILQFLDEEKFKETVHKLEQESAFYF. In terms of domain architecture, CTLH spans 34 to 92; sequence FYFNMKHFEDLVQGGEWDEVEKYLSGFTKVEDNRYSMKIFFEIRKQKYLEALDRHDRAK. WD repeat units follow at residues 344 to 384, 451 to 492, 495 to 536, 539 to 582, 586 to 625, 630 to 669, 771 to 810, 838 to 876, 879 to 919, 922 to 961, 970 to 1011, and 1015 to 1054; these read NQGS…RIAH, AHIG…KQYT, GHEA…SRVD, APGH…IKRT, FRKR…ILTT, GGLP…RLLR, ATSS…RNPN, NPEE…VMTT, APPP…VKSK, GHSK…KKKS, RSGA…RSWS, and ALPA…LRCR. Residues 1102-1133 form a disordered region; that stretch reads DSDPKWGVAPPQDNGTHPTISAAPAAANKPEV.

Tetramer. Interacts with D53, probably via the EAR motifs. Binds to AP2-1/TOE1, AP2-3/SNB and AP2-2/IDS1. Interacts with WOX1. Interacts with MOF1. As to expression, expressed in stems and panicles. Detected in roots, seeds, leaves and sheath. Expressed in the meristem and lateral organ primordia.

It localises to the nucleus. Its function is as follows. Transcriptional corepressor involved in branch formation regulation, presumably by suppressing primary branch formation and promoting secondary branch formation. Required for the cell elongation in the first internode and pollen development. Probable downstream regulator of strigolactones signaling important in axillary meristem maintenance. Acts in auxin signaling and is associated with the regulation of histone deacetylation. Essential for the function of miR172 microRNA and its target genes in regulating panicle development. In Oryza sativa subsp. japonica (Rice), this protein is Protein TOPLESS-RELATED PROTEIN 2.